A 333-amino-acid polypeptide reads, in one-letter code: MPSGGNGTSNGVANANSTGNAGTSGNVPIYKPYRHLKTLEGHTAAISCVKFSNDGNLLASASVDKTMILWSATNYSLIHRYEGHSSGISDLAWSSDSHYTCSASDDCTLRIWDARSPYECLKVLRGHTNFVFCVNFNPPSNLIVSGSFDETIRIWEVKTGKCVRMIKAHSMPISSVHFNRDGSLIVSASHDGSCKIWDAKEGTCLKTLIDDKSPAVSFAKFSPNGKFILVATLDSTLKLSNYATGKFLKVYTGHTNKVFCITSAFSVTNGKYIVSGSEDNCVYLWDLQARNILQRLEGHTDAVISVSCHPVQNEISSSGNHLDKTIRIWKQDA.

WD repeat units follow at residues 1 to 40, 41 to 80, 83 to 122, 126 to 167, 169 to 207, 211 to 252, 253 to 295, and 298 to 333; these read MPSG…KTLE, GHTA…LIHR, GHSS…ECLK, GHTN…RMIK, HSMP…CLKT, DKSP…KVYT, GHTN…ILQR, and GHTD…KQDA.

As to quaternary structure, unlike WDR5A, does not interact with RBL or TRO.

The sequence is that of COMPASS-like H3K4 histone methylase component WDR5B from Arabidopsis thaliana (Mouse-ear cress).